The sequence spans 459 residues: Spermidine/putrescine import ATP-binding protein PotA (459 aa).

The 320-residue stretch at 15–334 (IELIDIVKQF…PRNIWVAKFI (320 aa)) folds into the ABC transporter domain. 47 to 54 (GPSGSGKT) is an ATP binding site. Positions 115 to 203 (RVPKENVKKE…EEFKNKYFKR (89 aa)) are insert.

The protein belongs to the ABC transporter superfamily. Spermidine/putrescine importer (TC 3.A.1.11.1) family. In terms of assembly, the complex is composed of two ATP-binding proteins (PotA), two transmembrane proteins (PotB and PotC) and a solute-binding protein (PotD).

The protein resides in the cell membrane. The catalysed reaction is ATP + H2O + polyamine-[polyamine-binding protein]Side 1 = ADP + phosphate + polyamineSide 2 + [polyamine-binding protein]Side 1.. Functionally, part of the ABC transporter complex PotABCD involved in spermidine/putrescine import. Responsible for energy coupling to the transport system. The protein is Spermidine/putrescine import ATP-binding protein PotA of Mycoplasmopsis synoviae (strain 53) (Mycoplasma synoviae).